The following is a 350-amino-acid chain: MPQSVPLFQIEPVSKAQDQLIQQKIDLKTKPPGALGQLESLALQIARIQGAKQLQIVYPTMLVFAGDHGIAAEGVSIAPSEVTRQMVQNFAHGGAAINVFCRQLGFNLEVIDCGILTPVEDAEGIIDQRLGAGTAAIHLEPAMTLACVDKGFAMAQALIERHHQAGCNLVAFGEMGIGNTSSAAAIMAAIMQLDVADCVGRGTGINSETLERKQMLIELALLLHQSAMTGPRQVLACLGGFEIVQMTGAMLAAAERKMLVVVDGFIATAAALVAVSINANVRDYLIFAHRSEEQGHQRMLEHLKAKPLLSLGLRLGEGTGAALALPLIQAAVNFYNQMASFSDAGIEAVV.

Residue Glu-317 is the Proton acceptor of the active site.

It belongs to the CobT family.

The enzyme catalyses 5,6-dimethylbenzimidazole + nicotinate beta-D-ribonucleotide = alpha-ribazole 5'-phosphate + nicotinate + H(+). Its pathway is nucleoside biosynthesis; alpha-ribazole biosynthesis; alpha-ribazole from 5,6-dimethylbenzimidazole: step 1/2. Catalyzes the synthesis of alpha-ribazole-5'-phosphate from nicotinate mononucleotide (NAMN) and 5,6-dimethylbenzimidazole (DMB). The chain is Nicotinate-nucleotide--dimethylbenzimidazole phosphoribosyltransferase from Shewanella sp. (strain ANA-3).